Here is a 240-residue protein sequence, read N- to C-terminus: Guanine nucleotide exchange factor sopE2 (240 aa).

The GEF catalytic domain stretch occupies residues 78-240 (LTSKTVKDFM…IANKYLQNAS (163 aa)).

The protein belongs to the GEF (guanine exchange factor) SopE family.

Its subcellular location is the secreted. Functionally, activator for CDC42 by directly engaging this Rho GTPase and acting as potent guanine nucleotide exchange factor (GEF). This activation results in actin cytoskeleton rearrangements and stimulates membrane ruffling, promoting bacterial entry into non-phagocytic cells. Also activates NF-kB, p38 and ERK kinases, which are known to be involved in the induction of IL-8 expression. Chaperone InvB is required for secretion, translocation and stabilization of intracellular levels of sopE2. The protein is Guanine nucleotide exchange factor sopE2 (sopE2) of Salmonella typhimurium (strain LT2 / SGSC1412 / ATCC 700720).